We begin with the raw amino-acid sequence, 338 residues long: Glycerol-3-phosphate dehydrogenase [NAD(P)+] (338 aa).

Residues Ser13, Trp14, and Lys108 each contribute to the NADPH site. Sn-glycerol 3-phosphate contacts are provided by Lys108, Gly139, and Ser141. Ala143 is a binding site for NADPH. Residues Lys194, Asp247, Ser257, Arg258, and Asn259 each contribute to the sn-glycerol 3-phosphate site. Lys194 functions as the Proton acceptor in the catalytic mechanism. Arg258 contacts NADPH. Residues Val282 and Glu284 each coordinate NADPH.

Belongs to the NAD-dependent glycerol-3-phosphate dehydrogenase family.

Its subcellular location is the cytoplasm. It catalyses the reaction sn-glycerol 3-phosphate + NAD(+) = dihydroxyacetone phosphate + NADH + H(+). The catalysed reaction is sn-glycerol 3-phosphate + NADP(+) = dihydroxyacetone phosphate + NADPH + H(+). It functions in the pathway membrane lipid metabolism; glycerophospholipid metabolism. Functionally, catalyzes the reduction of the glycolytic intermediate dihydroxyacetone phosphate (DHAP) to sn-glycerol 3-phosphate (G3P), the key precursor for phospholipid synthesis. This Streptococcus pneumoniae (strain Taiwan19F-14) protein is Glycerol-3-phosphate dehydrogenase [NAD(P)+].